Consider the following 212-residue polypeptide: MADQEIENAVSRALEDAPERNFRETVDLAVNLRDLDLNDPSNRVDESVVLPAGTGQETTIVVFAEGETALRAEEVADDVLDEDELEELGGDDDAAKDLADDTDFFIAEKGLMQDIGRYLGTVLGPRGKMPEPLDPDDDVVEVIERMKNTVQLRSGERRTFHTRVGAEDMSAENIADNIDVILRRLHADLEKGPLNIDTVYVKTTMGPAMEVA.

The protein belongs to the universal ribosomal protein uL1 family. In terms of assembly, part of the 50S ribosomal subunit.

In terms of biological role, binds directly to 23S rRNA. Probably involved in E site tRNA release. Protein L1 is also a translational repressor protein, it controls the translation of its operon by binding to its mRNA. The chain is Large ribosomal subunit protein uL1 from Haloarcula marismortui (strain ATCC 43049 / DSM 3752 / JCM 8966 / VKM B-1809) (Halobacterium marismortui).